The sequence spans 31 residues: Nemertide alpha-5 (31 aa).

3 cysteine pairs are disulfide-bonded: Cys2/Cys16, Cys9/Cys20, and Cys15/Cys26. Residues Pro28 and Pro29 each carry the 4-hydroxyproline modification.

Belongs to the nemertide family. As to expression, confined to the epidermis and to the mucus layer.

The protein resides in the secreted. Highly potent toxin against both insect and some mammalian sodium channels (Nav). It potently inhibits inactivation of insect sodium channels of B.germanica (BgNav1) (EC(50)=7.8 nM) and also delays the inactivation of mammalian Nav with potent activity on Nav1.3/SCN3A and Nav1.4/SCN4A (hNav1.1/SCN1A; EC(50)=102.1 nM, rNav1.2/SCN2A; EC(50)=156.1 nM, rNav1.3/SCN3A; EC(50)=9.4 nM, rNav1.4/SCN4A; EC(50)=15.4 nM, hNav1.5/SCN5A; EC(50)=132.7 nM, mNav1.6/SCN8A; EC(50)=66.9 nM, hNav1.9/SCN9A; EC(50)=73 nM). 1 uM is enough to completely inhibits the inactivation, resulting in sustained non-inactivating currents. In addition, the toxin significantly enhances the recovery from inactivation, and the open state is not required for the toxin to interact with the channel. In vivo, injection into brine shrimp (Artemia salina) stops movement or causes death after 24 hours (EC(50)=0.4 uM). The polypeptide is Nemertide alpha-5 (Ramphogordius pseudolacteus (Ribbon worm)).